The primary structure comprises 1163 residues: Leptin receptor (1163 aa).

A signal peptide spans 1 to 21; it reads MICQKFCVVLLHWEFICVITA. At 22 to 837 the chain is on the extracellular side; sequence FNLSYPITPW…QDNTEKHQND (816 aa). N-linked (GlcNAc...) asparagine glycans are attached at residues Asn-23, Asn-41, Asn-56, Asn-71, Asn-79, Asn-96, and Asn-114. Cystine bridges form between Cys-37/Cys-88 and Cys-87/Cys-97. Intrachain disulfides connect Cys-129-Cys-140 and Cys-184-Cys-194. Asn-185, Asn-204, Asn-274, Asn-345, and Asn-395 each carry an N-linked (GlcNAc...) asparagine glycan. The Fibronectin type-III 1 domain maps to 237 to 331; sequence PPLGLRMEIT…TPHVFTTQDV (95 aa). 2 disulfides stabilise this stretch: Cys-350–Cys-410 and Cys-411–Cys-416. N-linked (GlcNAc...) asparagine glycosylation occurs at Asn-431. Cystine bridges form between Cys-434-Cys-445, Cys-471-Cys-526, and Cys-486-Cys-496. Positions 465 to 482 are leptin-binding; that stretch reads RRSSLYCFDIPSIHPISK. 3 Fibronectin type-III domains span residues 537–632, 637–730, and 738–831; these read PPSS…TVVM, PMRG…LTFS, and IVQS…QDNT. The WSXWS motif motif lies at 620-624; that stretch reads WSNWS. Residues Asn-622, Asn-657, Asn-668, Asn-686, Asn-695, Asn-726, and Asn-748 are each glycosylated (N-linked (GlcNAc...) asparagine). A helical transmembrane segment spans residues 838–860; the sequence is AGLYVIVPVIISSSILLLGTLLI. Over 861–1163 the chain is Cytoplasmic; the sequence is LHQRMKKLFW…MENKMCDLTV (303 aa). Residues 869–877 carry the Box 1 motif motif; the sequence is FWEDVPNPK. At Ser-880 the chain carries Phosphoserine. Positions 891–896 are required for JAK2 activation; that stretch reads ETFEHL. The required for STAT3 phosphorylation stretch occupies residues 896-904; sequence LFIKHTASV. The residue at position 984 (Tyr-984) is a Phosphotyrosine; by JAK2. At Tyr-1077 the chain carries Phosphotyrosine. At Tyr-1139 the chain carries Phosphotyrosine; by JAK2.

It belongs to the type I cytokine receptor family. Type 2 subfamily. In terms of assembly, present as a mixture of monomers and dimers. The phosphorylated receptor binds a number of SH2 domain-containing proteins such as JAK2, STAT3, PTPN11, and SOCS3. Interaction with SOCS3 inhibits JAK/STAT signaling and MAPK cascade. In terms of processing, on ligand binding, phosphorylated on two conserved C-terminal tyrosine residues (isoform B only) by JAK2. Tyr-984 is required for complete binding and activation of PTPN11, ERK/FOS activation and, for interaction with SOCS3. Phosphorylation on Tyr-1139 is required for STAT3 binding/activation. On ligand binding, phosphorylated on two conserved C-terminal tyrosine residues (isoform B only) by JAK2. Tyr-984 is required for complete binding and activation of PTPN11, ERK/FOS activation,for interaction with SOCS3 and SOCS3 mediated inhibition of leptin signaling. Phosphorylation on Tyr-1139 is required for STAT3 binding/activation. Phosphorylation of Tyr-1077 has a more accessory role. In terms of tissue distribution, widely expressed. High expression of isoform B in liver, adipose tissue, hypothalamus and choroid plexus.

It localises to the cell membrane. The protein resides in the basolateral cell membrane. Its function is as follows. Receptor for hormone LEP/leptin. On ligand binding, mediates LEP central and peripheral effects through the activation of different signaling pathways such as JAK2/STAT3 and MAPK cascade/FOS. In the hypothalamus, LEP acts as an appetite-regulating factor that induces a decrease in food intake and an increase in energy consumption by inducing anorexinogenic factors and suppressing orexigenic neuropeptides, also regulates bone mass and secretion of hypothalamo-pituitary-adrenal hormones. In the periphery, increases basal metabolism, influences reproductive function, regulates pancreatic beta-cell function and insulin secretion, is pro-angiogenic and affects innate and adaptive immunity. Control of energy homeostasis and melanocortin production (stimulation of POMC and full repression of AgRP transcription) is mediated by STAT3 signaling, whereas distinct signals regulate NPY and the control of fertility, growth and glucose homeostasis. Involved in the regulation of counter-regulatory response to hypoglycemia by inhibiting neurons of the parabrachial nucleus. Has a specific effect on T lymphocyte responses, differentially regulating the proliferation of naive and memory T-cells. Leptin increases Th1 and suppresses Th2 cytokine production. In terms of biological role, may transport LEP across the blood-brain barrier. Binds LEP and mediates LEP endocytosis. Does not induce phosphorylation of and activate STAT3. The polypeptide is Leptin receptor (LEPR) (Macaca mulatta (Rhesus macaque)).